Consider the following 264-residue polypeptide: ATP synthase subunit a (264 aa).

5 helical membrane-spanning segments follow: residues 39–59 (LDTL…FYIV), 97–117 (VAPL…MDLV), 139–159 (TADP…VIFY), 205–225 (LFGN…LPWW), and 239–259 (LLVI…YISL).

This sequence belongs to the ATPase A chain family. In terms of assembly, F-type ATPases have 2 components, CF(1) - the catalytic core - and CF(0) - the membrane proton channel. CF(1) has five subunits: alpha(3), beta(3), gamma(1), delta(1), epsilon(1). CF(0) has three main subunits: a(1), b(2) and c(9-12). The alpha and beta chains form an alternating ring which encloses part of the gamma chain. CF(1) is attached to CF(0) by a central stalk formed by the gamma and epsilon chains, while a peripheral stalk is formed by the delta and b chains.

The protein resides in the cell inner membrane. Functionally, key component of the proton channel; it plays a direct role in the translocation of protons across the membrane. This chain is ATP synthase subunit a, found in Coxiella burnetii (strain CbuK_Q154) (Coxiella burnetii (strain Q154)).